A 339-amino-acid polypeptide reads, in one-letter code: Phospho-N-acetylmuramoyl-pentapeptide-transferase (339 aa).

Helical transmembrane passes span 4–24 (TTII…PFFI), 53–73 (MGGT…AFVL), 80–100 (AFGA…IGFL), 113–133 (GLTA…FYLV), 145–165 (LFGF…FWVV), 176–196 (GIDG…SVIA), 202–222 (FDVL…FVYN), 228–248 (VFMG…ISIT), 253–273 (WTLL…MLQV), and 318–338 (VDFF…AILY).

Belongs to the glycosyltransferase 4 family. MraY subfamily. It depends on Mg(2+) as a cofactor.

It is found in the cell membrane. The catalysed reaction is UDP-N-acetyl-alpha-D-muramoyl-L-alanyl-gamma-D-glutamyl-L-lysyl-D-alanyl-D-alanine + di-trans,octa-cis-undecaprenyl phosphate = Mur2Ac(oyl-L-Ala-gamma-D-Glu-L-Lys-D-Ala-D-Ala)-di-trans,octa-cis-undecaprenyl diphosphate + UMP. It functions in the pathway cell wall biogenesis; peptidoglycan biosynthesis. Catalyzes the initial step of the lipid cycle reactions in the biosynthesis of the cell wall peptidoglycan: transfers peptidoglycan precursor phospho-MurNAc-pentapeptide from UDP-MurNAc-pentapeptide onto the lipid carrier undecaprenyl phosphate, yielding undecaprenyl-pyrophosphoryl-MurNAc-pentapeptide, known as lipid I. The protein is Phospho-N-acetylmuramoyl-pentapeptide-transferase of Streptococcus mutans serotype c (strain ATCC 700610 / UA159).